The chain runs to 1458 residues: Phospholipase B1, membrane-associated (1458 aa).

Residues 1–21 (MGLRPGIFLLELLLLLGQGTP) form the signal peptide. Residues 22 to 1417 (QIHTSPRKST…QAEEAPEVLY (1396 aa)) lie on the Extracellular side of the membrane. 3 tandem repeats follow at residues 39-347 (ETLK…YRNS), 362-707 (VREG…YKNS), and 708-1054 (MQGH…PRNS). The interval 39 to 1402 (ETLKNSPFPC…SPYLYTLRNS (1364 aa)) is 4 X 308-326 AA approximate repeats. Residues Asn173 and Asn240 are each glycosylated (N-linked (GlcNAc...) asparagine). Ser400 is a catalytic residue. The N-linked (GlcNAc...) asparagine glycan is linked to Asn493. Asp514 is an active-site residue. N-linked (GlcNAc...) asparagine glycans are attached at residues Asn529 and Asn590. Residue His655 is part of the active site. N-linked (GlcNAc...) asparagine glycosylation is found at Asn690, Asn783, Asn797, Asn809, Asn1055, Asn1113, Asn1275, and Asn1378. Repeat 4 spans residues 1064 to 1402 (IENWGSDFLC…SPYLYTLRNS (339 aa)). The tract at residues 1403–1445 (RLLPDQAEEAPEVLYWAVPVAAGVGLVVGIIGTVVWRCRRGGR) is necessary for membrane localization. Residues 1418-1438 (WAVPVAAGVGLVVGIIGTVVW) form a helical membrane-spanning segment. Residues 1439-1458 (RCRRGGRREDPPMSLRTVAL) are Cytoplasmic-facing.

It belongs to the 'GDSL' lipolytic enzyme family. Phospholipase B1 subfamily. Post-translationally, undergoes proteolytic cleavage in the ileum. As to expression, expressed in the epidermis (at protein level).

The protein resides in the apical cell membrane. It catalyses the reaction a 1,2-diacyl-sn-glycero-3-phosphocholine + H2O = a 1-acyl-sn-glycero-3-phosphocholine + a fatty acid + H(+). The catalysed reaction is a 1-O-alkyl-2-acyl-sn-glycero-3-phosphocholine + H2O = a 1-O-alkyl-sn-glycero-3-phosphocholine + a fatty acid + H(+). The enzyme catalyses a 1-acyl-sn-glycero-3-phosphocholine + H2O = sn-glycerol 3-phosphocholine + a fatty acid + H(+). It carries out the reaction a triacylglycerol + H2O = a diacylglycerol + a fatty acid + H(+). It catalyses the reaction 1,2-dihexadecanoyl-sn-glycero-3-phosphocholine + H2O = 1-hexadecanoyl-sn-glycero-3-phosphocholine + hexadecanoate + H(+). The catalysed reaction is 1-hexadecanoyl-2-(9Z-octadecenoyl)-sn-glycero-3-phosphocholine + H2O = 1-hexadecanoyl-sn-glycero-3-phosphocholine + (9Z)-octadecenoate + H(+). The enzyme catalyses 1,2-di-(9Z-octadecenoyl)-sn-glycero-3-phosphocholine + H2O = 1-(9Z-octadecenoyl)-sn-glycero-3-phosphocholine + (9Z)-octadecenoate + H(+). It carries out the reaction 1-hexadecanoyl-2-(9Z,12Z-octadecadienoyl)-sn-glycero-3-phosphocholine + H2O = (9Z,12Z)-octadecadienoate + 1-hexadecanoyl-sn-glycero-3-phosphocholine + H(+). It catalyses the reaction 1-hexadecanoyl-2-(9Z,12Z-octadecadienoyl)-sn-glycero-3-phosphocholine + H2O = 2-(9Z,12Z-octadecadienoyl)-sn-glycero-3-phosphocholine + hexadecanoate + H(+). The catalysed reaction is 1-hexadecanoyl-2-(9Z-octadecenoyl)-sn-glycero-3-phosphoethanolamine + H2O = 1-hexadecanoyl-sn-glycero-3-phosphoethanolamine + (9Z)-octadecenoate + H(+). The enzyme catalyses 1-hexadecanoyl-2-(9Z-octadecenoyl)-sn-glycero-3-phospho-(1'-sn-glycerol) + H2O = 1-hexadecanoyl-sn-glycero-3-phospho-(1'-sn-glycerol) + (9Z)-octadecenoate + H(+). It carries out the reaction 1,2-dihexadecanoyl-sn-glycero-3-phosphocholine + 2 H2O = sn-glycerol 3-phosphocholine + 2 hexadecanoate + 2 H(+). It catalyses the reaction 1-O-hexadecyl-2-(9Z)-octadecenoyl-sn-glycero-3-phosphocholine + H2O = 1-O-hexadecyl-sn-glycero-3-phosphocholine + (9Z)-octadecenoate + H(+). The catalysed reaction is 1-hexadecanoyl-sn-glycero-3-phosphocholine + H2O = sn-glycerol 3-phosphocholine + hexadecanoate + H(+). The enzyme catalyses 1,2,3-tri-(9Z-octadecenoyl)-glycerol + H2O = di-(9Z)-octadecenoylglycerol + (9Z)-octadecenoate + H(+). It carries out the reaction 1-hexadecanoyl-2-(9Z)-octadecenoyl-3-octadecanoyl-sn-glycerol + H2O = 1-hexadecanoyl-2-(9Z-octadecenoyl)-sn-glycerol + octadecanoate + H(+). It catalyses the reaction 1,3-dihexadecanoyl-2-(9Z-octadecenoyl)glycerol + H2O = 1,3-dihexadecanoylglycerol + (9Z)-octadecenoate + H(+). The catalysed reaction is 1,3-dihexadecanoyl-2-(9Z-octadecenoyl)glycerol + H2O = 1-hexadecanoyl-2-(9Z-octadecenoyl)-glycerol + hexadecanoate + H(+). The enzyme catalyses 1-hexadecanoyl-2-(9Z)-octadecenoyl-3-octadecanoyl-sn-glycerol + H2O = 1-hexadecanoyl-3-octadecanoyl-sn-glycerol + (9Z)-octadecenoate + H(+). It carries out the reaction 1-hexadecanoyl-2-(9Z)-octadecenoyl-3-octadecanoyl-sn-glycerol + H2O = 2-(9Z-octadecenoyl)-3-octadecanoyl-sn-glycerol + hexadecanoate + H(+). It catalyses the reaction 1-octadecanoyl-2-(9Z,12Z)-octadecadienoyl-sn-glycerol + H2O = 1-octadecanoyl-sn-glycerol + (9Z,12Z)-octadecadienoate + H(+). The catalysed reaction is 1,2-di-(9Z-octadecenoyl)-sn-glycerol + H2O = 1-(9Z-octadecenoyl)-sn-glycerol + (9Z)-octadecenoate + H(+). The enzyme catalyses 2,3-di-(9Z)-octadecenoyl-sn-glycerol + H2O = 3-(9Z-octadecenoyl)-sn-glycerol + (9Z)-octadecenoate + H(+). It carries out the reaction 1,3-di-(9Z-octadecenoyl)-glycerol + H2O = 1-(9Z-octadecenoyl)-glycerol + (9Z)-octadecenoate + H(+). It catalyses the reaction 1-(9Z-octadecenoyl)-glycerol + H2O = glycerol + (9Z)-octadecenoate + H(+). The catalysed reaction is 2-(9Z-octadecenoyl)-glycerol + H2O = glycerol + (9Z)-octadecenoate + H(+). Functionally, calcium-independent membrane-associated phospholipase that catalyzes complete diacylation of phospholipids by hydrolyzing both sn-1 and sn-2 fatty acyl chains attached to the glycerol backbone (phospholipase B activity). Has dual phospholipase and lysophospholipase activities toward diacylphospholipids. Preferentially cleaves sn-2 ester bonds over sn-1 bonds. Acts as a lipase toward glycerolipid substrates. Hydrolyzes fatty acyl chains of diacylglycerols with preference for the sn-2 position and of triacylglycerols with not positional selectivity. May also hydrolyze long chain retinyl esters such as retinyl palmitate. May contribute to digestion of dietary phospholipids, glycerolipids and retinoids, facilitating lipid absorption at the brush border. This chain is Phospholipase B1, membrane-associated (PLB1), found in Homo sapiens (Human).